A 467-amino-acid chain; its full sequence is UDP-N-acetylmuramate--L-alanine ligase (467 aa).

123–129 serves as a coordination point for ATP; sequence GTHGKST.

It belongs to the MurCDEF family.

Its subcellular location is the cytoplasm. It carries out the reaction UDP-N-acetyl-alpha-D-muramate + L-alanine + ATP = UDP-N-acetyl-alpha-D-muramoyl-L-alanine + ADP + phosphate + H(+). The protein operates within cell wall biogenesis; peptidoglycan biosynthesis. Functionally, cell wall formation. The chain is UDP-N-acetylmuramate--L-alanine ligase from Arthrobacter sp. (strain FB24).